The following is a 464-amino-acid chain: Forkhead box protein N3 (464 aa).

2 disordered regions span residues 1–53 (MGPI…EKGG) and 85–108 (PVQD…DAKQ). Residues 14 to 30 (TGISVSSQCYRSSTLSN) are compositionally biased toward polar residues. Residues 113 to 209 (KPPYSFSCLI…QALKKTPYHP (97 aa)) constitute a DNA-binding region (fork-head). 2 disordered regions span residues 294–337 (MESE…SSSA) and 381–428 (LVES…MKEA). Low complexity predominate over residues 316–336 (SSAKSANKRSSSPSDSISSSS). Residues 389-401 (QHKKKQHLLKLRR) are compositionally biased toward basic residues.

Its subcellular location is the nucleus. Acts as a transcriptional repressor. May be involved in DNA damage-inducible cell cycle arrests (checkpoints). The sequence is that of Forkhead box protein N3 from Xenopus tropicalis (Western clawed frog).